Consider the following 183-residue polypeptide: MKNVTHSFVFLAHWPSAGSFGLNTDILATNLINLTVVVGVLIYFGKGVLKDLLDNRKQRILSTIRNSEELRRGTIEQLEKARIRLQKVELEADEYRMNGYSEIEREKANLINATSISLEQLEKSKNETLYFEKQRAMNQVRQRVFQQAVQGALGTLNSCLNTELHFRTIRANISILGAMEWKS.

A helical membrane pass occupies residues 27–49 (LATNLINLTVVVGVLIYFGKGVL).

This sequence belongs to the ATPase B chain family. F-type ATPases have 2 components, F(1) - the catalytic core - and F(0) - the membrane proton channel. F(1) has five subunits: alpha(3), beta(3), gamma(1), delta(1), epsilon(1). F(0) has four main subunits: a(1), b(1), b'(1) and c(10-14). The alpha and beta chains form an alternating ring which encloses part of the gamma chain. F(1) is attached to F(0) by a central stalk formed by the gamma and epsilon chains, while a peripheral stalk is formed by the delta, b and b' chains.

Its subcellular location is the plastid. It is found in the chloroplast thylakoid membrane. F(1)F(0) ATP synthase produces ATP from ADP in the presence of a proton or sodium gradient. F-type ATPases consist of two structural domains, F(1) containing the extramembraneous catalytic core and F(0) containing the membrane proton channel, linked together by a central stalk and a peripheral stalk. During catalysis, ATP synthesis in the catalytic domain of F(1) is coupled via a rotary mechanism of the central stalk subunits to proton translocation. Its function is as follows. Component of the F(0) channel, it forms part of the peripheral stalk, linking F(1) to F(0). This Oryza nivara (Indian wild rice) protein is ATP synthase subunit b, chloroplastic.